Here is a 606-residue protein sequence, read N- to C-terminus: NADH-ubiquinone oxidoreductase chain 5 (606 aa).

Transmembrane regions (helical) follow at residues 1–21 (MNMF…PIIM), 43–63 (AFMI…ETIF), 87–107 (MIFV…SMWY), 117–137 (FFKY…ANNM), 140–160 (LFIG…WWYG), 171–191 (AVLY…WFLL), 201–221 (IFIT…LAAT), 241–261 (TPVS…FLLI), 273–293 (IQTL…ICAL), 310–330 (LGLM…LHIC), 365–385 (VLPF…GMPF), 409–429 (LLIT…IMFF), 457–477 (LLIG…PTTI), 488–508 (MTAL…NLTT), and 582–602 (GLIK…LLIL).

It belongs to the complex I subunit 5 family. As to quaternary structure, core subunit of respiratory chain NADH dehydrogenase (Complex I) which is composed of 45 different subunits.

It localises to the mitochondrion inner membrane. The catalysed reaction is a ubiquinone + NADH + 5 H(+)(in) = a ubiquinol + NAD(+) + 4 H(+)(out). Its function is as follows. Core subunit of the mitochondrial membrane respiratory chain NADH dehydrogenase (Complex I) which catalyzes electron transfer from NADH through the respiratory chain, using ubiquinone as an electron acceptor. Essential for the catalytic activity and assembly of complex I. This Canis lupus familiaris (Dog) protein is NADH-ubiquinone oxidoreductase chain 5 (MT-ND5).